Reading from the N-terminus, the 112-residue chain is Nucleoid-associated protein RER_03900 (112 aa).

It belongs to the YbaB/EbfC family. As to quaternary structure, homodimer.

Its subcellular location is the cytoplasm. The protein resides in the nucleoid. Binds to DNA and alters its conformation. May be involved in regulation of gene expression, nucleoid organization and DNA protection. In Rhodococcus erythropolis (strain PR4 / NBRC 100887), this protein is Nucleoid-associated protein RER_03900.